The following is a 131-amino-acid chain: L-ectoine synthase (131 aa).

Belongs to the ectoine synthase family.

The catalysed reaction is (2S)-4-acetamido-2-aminobutanoate = L-ectoine + H2O. The protein operates within amine and polyamine biosynthesis; ectoine biosynthesis; L-ectoine from L-aspartate 4-semialdehyde: step 3/3. Functionally, catalyzes the circularization of gamma-N-acetyl-alpha,gamma-diaminobutyric acid (ADABA) to ectoine (1,4,5,6-tetrahydro-2-methyl-4-pyrimidine carboxylic acid), which is an excellent osmoprotectant. The protein is L-ectoine synthase of Bordetella bronchiseptica (strain ATCC BAA-588 / NCTC 13252 / RB50) (Alcaligenes bronchisepticus).